A 153-amino-acid polypeptide reads, in one-letter code: SsrA-binding protein (153 aa).

A disordered region spans residues 129–153 (KREDMKKKDQSREMAQALRERSKSH).

The protein belongs to the SmpB family.

The protein localises to the cytoplasm. Functionally, required for rescue of stalled ribosomes mediated by trans-translation. Binds to transfer-messenger RNA (tmRNA), required for stable association of tmRNA with ribosomes. tmRNA and SmpB together mimic tRNA shape, replacing the anticodon stem-loop with SmpB. tmRNA is encoded by the ssrA gene; the 2 termini fold to resemble tRNA(Ala) and it encodes a 'tag peptide', a short internal open reading frame. During trans-translation Ala-aminoacylated tmRNA acts like a tRNA, entering the A-site of stalled ribosomes, displacing the stalled mRNA. The ribosome then switches to translate the ORF on the tmRNA; the nascent peptide is terminated with the 'tag peptide' encoded by the tmRNA and targeted for degradation. The ribosome is freed to recommence translation, which seems to be the essential function of trans-translation. This chain is SsrA-binding protein, found in Geobacter metallireducens (strain ATCC 53774 / DSM 7210 / GS-15).